A 655-amino-acid chain; its full sequence is Interferon-induced GTP-binding protein Mx2 (655 aa).

A compositionally biased stretch (polar residues) spans methionine 1 to serine 18. Residues methionine 1 to glutamine 28 form a disordered region. The 274-residue stretch at aspartate 60–proline 333 folds into the Dynamin-type G domain. Residues glycine 70 to serine 77 form a G1 motif region. Glycine 70–serine 77 contributes to the GTP binding site. The tract at residues valine 95–arginine 97 is G2 motif. The segment at aspartate 171 to glycine 174 is G3 motif. GTP-binding positions include aspartate 171–isoleucine 175 and threonine 240–aspartate 243. The segment at threonine 240 to aspartate 243 is G4 motif. Residues lysine 272–glycine 275 form a G5 motif region. The tract at residues glutamate 542–leucine 562 is disordered. Residues glycine 552 to leucine 562 are compositionally biased toward low complexity. Positions methionine 567–glycine 655 constitute a GED domain.

Belongs to the TRAFAC class dynamin-like GTPase superfamily. Dynamin/Fzo/YdjA family.

The protein localises to the cytoplasm. Interferon-induced dynamin-like GTPase with antiviral activity against vesicular stomatitis virus (VSV) and Hantaan virus (HNTV). The sequence is that of Interferon-induced GTP-binding protein Mx2 (Mx2) from Mus musculus (Mouse).